A 604-amino-acid chain; its full sequence is MAGDVEGFCSSIHDTSVSAGFRALYEEGLLLDVTLVIEDHQFQAHKALLATQSDYFRIMFTADMRERDQDKIHLKGLTATGFSHVLQFMYYGTIELSMNTVHEILQAAMYVQLIEVVKFCCSFLLAKICLENCAEIMRLLDDFGVNIEGVREKLDTFLLDNFVPLMSRPDFLSYLSFEKLMSYLDNDHLSRFPEIELYEAVQSWLRHDRRRWRHTDTIIQNIRFCLMTPTSVFEKVKTSEFYRYSRQLRYEVDQALNYFQNVHQQPLLDMKSSRIRSAKPQTTVFRGMIGHSMVNSKILLLKKPRVWWELEGPQVPLRPDCLAIVNNFVFLLGGEELGPDGEFHASSKVFRYDPRQNSWLQMADMSVPRSEFAVGVIGKFIYAVAGRTRDETFYSTERYDITNDKWEFVDPYPVNKYGHEGTVLNNKLFITGGITSSSTSKQVCVFDPSKEGTIEQRTRRTQVVTNCWENKSKMNYARCFHKMISYNGKLYVFGGVCVILRASFESQGCPSTEVYNPETDQWTILASMPIGRSGHGVTVLDKQIMVLGGLCYNGHYSDSILTFDPDENKWKEDEYPRMPCKLDGLQVCNLHFPDYVLDEVRRCN.

The region spanning 31-98 is the BTB domain; the sequence is LDVTLVIEDH…MYYGTIELSM (68 aa). The 105-residue stretch at 133 to 237 folds into the BACK domain; that stretch reads CAEIMRLLDD…TPTSVFEKVK (105 aa). 5 Kelch repeats span residues 328-379, 381-426, 428-473, 489-542, and 544-590; these read FVFL…VIGK, IYAV…VLNN, LFIT…NKSK, KLYV…VLDK, and IMVL…VCNL.

In terms of assembly, homodimer. Dimerization does not affect PPP2R5B-binding, but is required for its proteasomal degradation. Interacts with CUL3. Directly interacts with PPP2R5B; this interaction leads to PPP2R5B proteasomal degradation. Interacts with RBBP8/CtIP; this interaction leads to RBBP8 proteasomal degradation. Interacts with PACMP micropeptide; interaction prevents ubiquitination and degradation of RBBP8/CtIP.

Its subcellular location is the nucleus. It participates in protein modification; protein ubiquitination. In terms of biological role, substrate-specific adapter for CUL3 E3 ubiquitin-protein ligase complex. Acts as an adapter for CUL3 to target the serine/threonine-protein phosphatase 2A (PP2A) subunit PPP2R5B for ubiquitination and subsequent proteasomal degradation, thus promoting exchange with other regulatory subunits. Acts as an adapter for CUL3 to target the DNA-end resection factor RBBP8/CtIP for ubiquitination and subsequent proteasomal degradation. Through the regulation of RBBP8/CtIP protein turnover, plays a key role in DNA damage response, favoring DNA double-strand repair through error-prone non-homologous end joining (NHEJ) over error-free, RBBP8-mediated homologous recombination (HR). This chain is Kelch-like protein 15 (KLHL15), found in Homo sapiens (Human).